The chain runs to 262 residues: Hemin import ATP-binding protein HmuV (262 aa).

In terms of domain architecture, ABC transporter spans 5–242 (LEARKAGFAT…ELIGAVFDVE (238 aa)). 37–44 (GPNGAGKS) serves as a coordination point for ATP.

Belongs to the ABC transporter superfamily. Heme (hemin) importer (TC 3.A.1.14.5) family. The complex is composed of two ATP-binding proteins (HmuV), two transmembrane proteins (HmuU) and a solute-binding protein (HmuT).

The protein resides in the cell inner membrane. Part of the ABC transporter complex HmuTUV involved in hemin import. Responsible for energy coupling to the transport system. The sequence is that of Hemin import ATP-binding protein HmuV from Rhodopseudomonas palustris (strain HaA2).